A 106-amino-acid chain; its full sequence is MNDSEFHRLADQLWLTIEERLDDWDGDSDIDCEINGGVLTITFENGSKIIINRQEPLHQVWLATKQGGYHFDLKGDEWICDRSGETFWDLLEQAATQQAGETVSFR.

The protein belongs to the frataxin family.

Involved in iron-sulfur (Fe-S) cluster assembly. May act as a regulator of Fe-S biogenesis. This Escherichia coli O139:H28 (strain E24377A / ETEC) protein is Iron-sulfur cluster assembly protein CyaY.